The primary structure comprises 130 residues: Ribonuclease P protein component 2 (130 aa).

It belongs to the eukaryotic/archaeal RNase P protein component 2 family. Consists of a catalytic RNA component and at least 4-5 protein subunits.

It is found in the cytoplasm. It catalyses the reaction Endonucleolytic cleavage of RNA, removing 5'-extranucleotides from tRNA precursor.. Its function is as follows. Part of ribonuclease P, a protein complex that generates mature tRNA molecules by cleaving their 5'-ends. The polypeptide is Ribonuclease P protein component 2 (Methanococcus vannielii (strain ATCC 35089 / DSM 1224 / JCM 13029 / OCM 148 / SB)).